The sequence spans 272 residues: tRNA uridine(34) hydroxylase (272 aa).

Residues 121 to 217 (SRSDVYTIDT…YFKSTGNINN (97 aa)) form the Rhodanese domain. The Cysteine persulfide intermediate role is filled by Cys177.

The protein belongs to the TrhO family.

It carries out the reaction uridine(34) in tRNA + AH2 + O2 = 5-hydroxyuridine(34) in tRNA + A + H2O. Its function is as follows. Catalyzes oxygen-dependent 5-hydroxyuridine (ho5U) modification at position 34 in tRNAs. The polypeptide is tRNA uridine(34) hydroxylase (Ehrlichia ruminantium (strain Welgevonden)).